A 342-amino-acid chain; its full sequence is Fatty acid desaturase 6 (342 aa).

The next 2 helical transmembrane spans lie at 39–59 (GVDC…FLCL) and 63–83 (NILA…TLTV). The Histidine box-1 signature appears at 87–91 (HLATH). A helical transmembrane segment spans residues 100 to 120 (WSKILMIFFLEVCTAFSAEFA). The Histidine box-2 signature appears at 124–128 (HVNLH). The next 2 helical transmembrane spans lie at 151-171 (YVYM…VALE) and 185-205 (LGFI…VSGF). Positions 277-281 (HVEHH) match the Histidine box-3 motif.

This sequence belongs to the fatty acid desaturase type 1 family.

The protein resides in the membrane. It participates in lipid metabolism; fatty acid metabolism. This is Fatty acid desaturase 6 (Fads6) from Mus musculus (Mouse).